Here is a 270-residue protein sequence, read N- to C-terminus: Malonyl-[acyl-carrier protein] O-methyltransferase (270 aa).

Belongs to the methyltransferase superfamily.

It catalyses the reaction malonyl-[ACP] + S-adenosyl-L-methionine = malonyl-[ACP] methyl ester + S-adenosyl-L-homocysteine. Its pathway is cofactor biosynthesis; biotin biosynthesis. Converts the free carboxyl group of a malonyl-thioester to its methyl ester by transfer of a methyl group from S-adenosyl-L-methionine (SAM). It allows to synthesize pimeloyl-ACP via the fatty acid synthetic pathway. This Magnetococcus marinus (strain ATCC BAA-1437 / JCM 17883 / MC-1) protein is Malonyl-[acyl-carrier protein] O-methyltransferase.